The sequence spans 113 residues: Putative pterin-4-alpha-carbinolamine dehydratase (113 aa).

The protein belongs to the pterin-4-alpha-carbinolamine dehydratase family.

It carries out the reaction (4aS,6R)-4a-hydroxy-L-erythro-5,6,7,8-tetrahydrobiopterin = (6R)-L-erythro-6,7-dihydrobiopterin + H2O. The polypeptide is Putative pterin-4-alpha-carbinolamine dehydratase (Nitrosomonas eutropha (strain DSM 101675 / C91 / Nm57)).